We begin with the raw amino-acid sequence, 520 residues long: Cytochrome P450 4F2 (520 aa).

Residues 1–4 (MSQL) constitute a propeptide that is removed on maturation. The heme site is built by E328 and C468.

Belongs to the cytochrome P450 family. Heme is required as a cofactor. Liver. Also present in kidney: specifically expressed in the S2 and S3 segments of proximal tubules in cortex and outer medulla.

The protein localises to the microsome membrane. It is found in the endoplasmic reticulum membrane. The enzyme catalyses an organic molecule + reduced [NADPH--hemoprotein reductase] + O2 = an alcohol + oxidized [NADPH--hemoprotein reductase] + H2O + H(+). The catalysed reaction is (5Z,8Z,11Z,14Z)-eicosatetraenoate + reduced [NADPH--hemoprotein reductase] + O2 = 20-hydroxy-(5Z,8Z,11Z,14Z)-eicosatetraenoate + oxidized [NADPH--hemoprotein reductase] + H2O + H(+). It catalyses the reaction (5Z,8Z,11Z)-eicosatrienoate + reduced [NADPH--hemoprotein reductase] + O2 = 20-hydroxy-(5Z,8Z,11Z)-eicosatrienoate + oxidized [NADPH--hemoprotein reductase] + H2O + H(+). It carries out the reaction (5Z,8Z,11Z,14Z,17Z)-eicosapentaenoate + reduced [NADPH--hemoprotein reductase] + O2 = 20-hydroxy-(5Z,8Z,11Z,14Z,17Z)-eicosapentaenoate + oxidized [NADPH--hemoprotein reductase] + H2O + H(+). The enzyme catalyses (4Z,7Z,10Z,13Z,16Z,19Z)-docosahexaenoate + reduced [NADPH--hemoprotein reductase] + O2 = 22-hydroxy-(4Z,7Z,10Z,13Z,16Z,19Z)-docosahexaenoate + oxidized [NADPH--hemoprotein reductase] + H2O + H(+). The catalysed reaction is 8,9-epoxy-(5Z,11Z,14Z)-eicosatrienoate + reduced [NADPH--hemoprotein reductase] + O2 = 20-hydroxy-8,9-epoxy-(5Z,11Z,14Z)-eicosatrienoate + oxidized [NADPH--hemoprotein reductase] + H2O + H(+). It catalyses the reaction (9S,10R)-epoxy-octadecanoate + reduced [NADPH--hemoprotein reductase] + O2 = 18-hydroxy-(9S,10R)-epoxy-octadecanoate + oxidized [NADPH--hemoprotein reductase] + H2O + H(+). It carries out the reaction (9R,10S)-epoxy-octadecanoate + reduced [NADPH--hemoprotein reductase] + O2 = 18-hydroxy-(9R,10S)-epoxy-octadecanoate + oxidized [NADPH--hemoprotein reductase] + H2O + H(+). The enzyme catalyses 12,13-epoxy-(9Z)-octadecenoate + reduced [NADPH--hemoprotein reductase] + O2 = 18-hydroxy-12,13-epoxy-(9Z)-octadecenoate + oxidized [NADPH--hemoprotein reductase] + H2O + H(+). The catalysed reaction is 9,10-epoxy-(12Z)-octadecenoate + reduced [NADPH--hemoprotein reductase] + O2 = 18-hydroxy-9,10-epoxy-(12Z)-octadecenoate + oxidized [NADPH--hemoprotein reductase] + H2O + H(+). It catalyses the reaction 8-hydroxy-(5Z,9E,11Z,14Z)-eicosatetraenoate + reduced [NADPH--hemoprotein reductase] + O2 = 8,20-dihydroxy-(5Z,9E,11Z,14Z)-eicosatetraenoate + oxidized [NADPH--hemoprotein reductase] + H2O + H(+). It carries out the reaction 12-hydroxy-(5Z,8Z,10E,14Z)-eicosatetraenoate + reduced [NADPH--hemoprotein reductase] + O2 = 12,20-dihydroxy-(5Z,8Z,10E,14Z)-eicosatetraenoate + oxidized [NADPH--hemoprotein reductase] + H2O + H(+). The enzyme catalyses 12-hydroxyoctadecanoate + reduced [NADPH--hemoprotein reductase] + O2 = 12,18-dihydroxyoctadecanoate + oxidized [NADPH--hemoprotein reductase] + H2O + H(+). The catalysed reaction is docosanoate + reduced [NADPH--hemoprotein reductase] + O2 = 22-hydroxydocosanoate + oxidized [NADPH--hemoprotein reductase] + H2O + H(+). It catalyses the reaction 22-hydroxydocosanoate + reduced [NADPH--hemoprotein reductase] + O2 = 22-oxodocosanoate + oxidized [NADPH--hemoprotein reductase] + 2 H2O + H(+). It carries out the reaction 22-oxodocosanoate + reduced [NADPH--hemoprotein reductase] + O2 = docosanedioate + oxidized [NADPH--hemoprotein reductase] + H2O + 2 H(+). The enzyme catalyses tetracosanoate + reduced [NADPH--hemoprotein reductase] + O2 = 24-hydroxytetracosanoate + oxidized [NADPH--hemoprotein reductase] + H2O + H(+). The catalysed reaction is hexacosanoate + reduced [NADPH--hemoprotein reductase] + O2 = 26-hydroxyhexacosanoate + oxidized [NADPH--hemoprotein reductase] + H2O + H(+). It catalyses the reaction 26-hydroxyhexacosanoate + reduced [NADPH--hemoprotein reductase] + O2 = 26-oxohexacosanoate + oxidized [NADPH--hemoprotein reductase] + 2 H2O + H(+). It carries out the reaction 26-oxohexacosanoate + reduced [NADPH--hemoprotein reductase] + O2 = hexacosanedioate + oxidized [NADPH--hemoprotein reductase] + H2O + 2 H(+). The enzyme catalyses 3-hydroxyoctadecanoate + reduced [NADPH--hemoprotein reductase] + O2 = 3,18-dihydroxyoctadecanoate + oxidized [NADPH--hemoprotein reductase] + H2O + H(+). The catalysed reaction is 3-hydroxyhexadecanoate + reduced [NADPH--hemoprotein reductase] + O2 = 3,16-dihydroxyhexadecanoate + oxidized [NADPH--hemoprotein reductase] + H2O + H(+). It catalyses the reaction leukotriene B4 + reduced [NADPH--hemoprotein reductase] + O2 = 20-hydroxy-leukotriene B4 + oxidized [NADPH--hemoprotein reductase] + H2O + H(+). It carries out the reaction 6-trans-leukotriene B4 + reduced [NADPH--hemoprotein reductase] + O2 = 20-hydroxy-6-trans-leukotriene B4 + oxidized [NADPH--hemoprotein reductase] + H2O + H(+). The enzyme catalyses lipoxin A4 + reduced [NADPH--hemoprotein reductase] + O2 = 20-hydroxy-lipoxin A4 + oxidized [NADPH--hemoprotein reductase] + H2O + H(+). The catalysed reaction is menaquinone-4 + reduced [NADPH--hemoprotein reductase] + O2 = omega-hydroxymenaquinone-4 + oxidized [NADPH--hemoprotein reductase] + H2O + H(+). It catalyses the reaction phylloquinone + reduced [NADPH--hemoprotein reductase] + O2 = omega-hydroxyphylloquinone + oxidized [NADPH--hemoprotein reductase] + H2O + H(+). It carries out the reaction (+)-alpha-tocopherol + reduced [NADPH--hemoprotein reductase] + O2 = 13-hydroxy-alpha-tocopherol + oxidized [NADPH--hemoprotein reductase] + H2O + H(+). The enzyme catalyses gamma-tocopherol + NADPH + O2 + H(+) = 13-hydroxy-gamma-tocopherol + NADP(+) + H2O. It functions in the pathway lipid metabolism; arachidonate metabolism. The protein operates within lipid metabolism; leukotriene B4 degradation. It participates in cofactor degradation; phylloquinone degradation. With respect to regulation, inhibited by dietary sesamin. Its function is as follows. A cytochrome P450 monooxygenase involved in the metabolism of various endogenous substrates, including fatty acids, eicosanoids and vitamins. Mechanistically, uses molecular oxygen inserting one oxygen atom into a substrate, and reducing the second into a water molecule, with two electrons provided by NADPH via cytochrome P450 reductase (CPR; NADPH-ferrihemoprotein reductase). Catalyzes predominantly the oxidation of the terminal carbon (omega-oxidation) of long- and very long-chain fatty acids. Displays high omega-hydroxylase activity toward polyunsaturated fatty acids (PUFAs). Participates in the conversion of arachidonic acid to omega-hydroxyeicosatetraenoic acid (20-HETE), a signaling molecule acting both as vasoconstrictive and natriuretic with overall effect on arterial blood pressure. Plays a role in the oxidative inactivation of eicosanoids, including both pro-inflammatory and anti-inflammatory mediators such as leukotriene B4 (LTB4), lipoxin A4 (LXA4), and several HETEs. Catalyzes omega-hydroxylation of 3-hydroxy fatty acids. Converts monoepoxides of linoleic acid leukotoxin and isoleukotoxin to omega-hydroxylated metabolites. Contributes to the degradation of very long-chain fatty acids (VLCFAs) by catalyzing successive omega-oxidations and chain shortening. Plays an important role in vitamin metabolism by chain shortening. Catalyzes omega-hydroxylation of the phytyl chain of tocopherols (forms of vitamin E), with preference for gamma-tocopherols over alpha-tocopherols, thus promoting retention of alpha-tocopherols in tissues. Omega-hydroxylates and inactivates phylloquinone (vitamin K1), and menaquinone-4 (MK-4, a form of vitamin K2), both acting as cofactors in blood coagulation. This Homo sapiens (Human) protein is Cytochrome P450 4F2.